Here is a 431-residue protein sequence, read N- to C-terminus: Transcription factor Sp7 (431 aa).

Residues 30 to 56 (SSPLRDSTTLGKAGTKKPYSVGSDLSA) form a disordered region. N6-propionyllysine is present on residues lysine 41 and lysine 45. A Glycyl lysine isopeptide (Lys-Gly) (interchain with G-Cter in ubiquitin) cross-link involves residue lysine 58. 2 disordered regions span residues 71–115 (TNGL…VPKG) and 154–260 (TPTP…SGGY). The short motif at 156 to 164 (TPWWDMHPG) is the 9aaTAD element. Residues 166–178 (NWLGGGQGQGDGL) show a composition bias toward gly residues. Lysine 230 participates in a covalent cross-link: Glycyl lysine isopeptide (Lys-Gly) (interchain with G-Cter in ubiquitin). 3 C2H2-type zinc fingers span residues 294–318 (HSCH…LRWH), 324–348 (FVCN…VRTH), and 354–376 (FTCL…QRTH). N6-propionyllysine occurs at positions 361 and 371. Residues 367–431 (DHLSKHQRTH…SPEQSNLLEI (65 aa)) are disordered. Positions 403 to 412 (SQTPRPSASP) are enriched in polar residues.

Belongs to the Sp1 C2H2-type zinc-finger protein family. As to quaternary structure, interacts with RIOX1; the interaction is direct and inhibits transcription activator activity. Post-translationally, ubiquitination at leads to proteasomal degradation. SP7 is a short-live protein with an endogenous half-life of approximately 12 hours. In terms of processing, propionylated. Depropionylation at Lys-371 by SIRT7 activates transcription factor activity and positively regulates bone formation by osteoblasts. In terms of tissue distribution, restricted to bone-derived cell.

It is found in the nucleus. Its function is as follows. Transcriptional activator essential for osteoblast differentiation. Binds to SP1 and EKLF consensus sequences and to other G/C-rich sequences. The sequence is that of Transcription factor Sp7 (SP7) from Homo sapiens (Human).